Reading from the N-terminus, the 171-residue chain is tRNA-splicing endonuclease subunit Sen15 (171 aa).

Residues 1–35 form a disordered region; that stretch reads MEERGDSEPTPGCSGLGPGGVRGFGDGGGAPSWAP. Residue Ser7 is modified to Phosphoserine. Residues 14–30 are compositionally biased toward gly residues; the sequence is SGLGPGGVRGFGDGGGA. At Ser168 the chain carries Phosphoserine.

Belongs to the SEN15 family. In terms of assembly, homodimer. tRNA splicing endonuclease is a heterotetramer composed of TSEN2, TSEN15, TSEN34/LENG5 and TSEN54. tRNA splicing endonuclease complex also contains proteins of the Pre-mRNA 3' end processing machinery, such as CLP1, CPSF1, CPSF4 and CSTF2. In terms of tissue distribution, widely expressed. Highly expressed in testis and uterus.

Its subcellular location is the nucleus. The protein resides in the nucleolus. Functionally, non-catalytic subunit of the tRNA-splicing endonuclease complex, a complex responsible for identification and cleavage of the splice sites in pre-tRNA. It cleaves pre-tRNA at the 5' and 3' splice sites to release the intron. The products are an intron and two tRNA half-molecules bearing 2',3' cyclic phosphate and 5'-OH termini. There are no conserved sequences at the splice sites, but the intron is invariably located at the same site in the gene, placing the splice sites an invariant distance from the constant structural features of the tRNA body. The tRNA splicing endonuclease is also involved in mRNA processing via its association with pre-mRNA 3'-end processing factors, establishing a link between pre-tRNA splicing and pre-mRNA 3'-end formation, suggesting that the endonuclease subunits function in multiple RNA-processing events. The protein is tRNA-splicing endonuclease subunit Sen15 (TSEN15) of Homo sapiens (Human).